The primary structure comprises 99 residues: Aspartyl/glutamyl-tRNA(Asn/Gln) amidotransferase subunit C (99 aa).

This sequence belongs to the GatC family. In terms of assembly, heterotrimer of A, B and C subunits.

It catalyses the reaction L-glutamyl-tRNA(Gln) + L-glutamine + ATP + H2O = L-glutaminyl-tRNA(Gln) + L-glutamate + ADP + phosphate + H(+). It carries out the reaction L-aspartyl-tRNA(Asn) + L-glutamine + ATP + H2O = L-asparaginyl-tRNA(Asn) + L-glutamate + ADP + phosphate + 2 H(+). In terms of biological role, allows the formation of correctly charged Asn-tRNA(Asn) or Gln-tRNA(Gln) through the transamidation of misacylated Asp-tRNA(Asn) or Glu-tRNA(Gln) in organisms which lack either or both of asparaginyl-tRNA or glutaminyl-tRNA synthetases. The reaction takes place in the presence of glutamine and ATP through an activated phospho-Asp-tRNA(Asn) or phospho-Glu-tRNA(Gln). This chain is Aspartyl/glutamyl-tRNA(Asn/Gln) amidotransferase subunit C, found in Cupriavidus necator (strain ATCC 17699 / DSM 428 / KCTC 22496 / NCIMB 10442 / H16 / Stanier 337) (Ralstonia eutropha).